We begin with the raw amino-acid sequence, 429 residues long: UDP-N-acetylglucosamine 1-carboxyvinyltransferase (429 aa).

Phosphoenolpyruvate is bound at residue 22 to 23 (KN). Position 102 (Arg102) interacts with UDP-N-acetyl-alpha-D-glucosamine. Cys126 functions as the Proton donor in the catalytic mechanism. Cys126 carries the 2-(S-cysteinyl)pyruvic acid O-phosphothioketal modification. Residues 131-135 (RPVDL), Asp316, and Ile338 contribute to the UDP-N-acetyl-alpha-D-glucosamine site.

The protein belongs to the EPSP synthase family. MurA subfamily.

It localises to the cytoplasm. The catalysed reaction is phosphoenolpyruvate + UDP-N-acetyl-alpha-D-glucosamine = UDP-N-acetyl-3-O-(1-carboxyvinyl)-alpha-D-glucosamine + phosphate. The protein operates within cell wall biogenesis; peptidoglycan biosynthesis. Cell wall formation. Adds enolpyruvyl to UDP-N-acetylglucosamine. This is UDP-N-acetylglucosamine 1-carboxyvinyltransferase from Methylocella silvestris (strain DSM 15510 / CIP 108128 / LMG 27833 / NCIMB 13906 / BL2).